A 289-amino-acid chain; its full sequence is Acetyl-coenzyme A carboxylase carboxyl transferase subunit beta (289 aa).

The CoA carboxyltransferase N-terminal domain occupies 24–289 (LWIKCPESGE…NSPRRAPIPA (266 aa)).

It belongs to the AccD/PCCB family. As to quaternary structure, acetyl-CoA carboxylase is a heterohexamer composed of biotin carboxyl carrier protein (AccB), biotin carboxylase (AccC) and two subunits each of ACCase subunit alpha (AccA) and ACCase subunit beta (AccD).

It is found in the cytoplasm. It catalyses the reaction N(6)-carboxybiotinyl-L-lysyl-[protein] + acetyl-CoA = N(6)-biotinyl-L-lysyl-[protein] + malonyl-CoA. The protein operates within lipid metabolism; malonyl-CoA biosynthesis; malonyl-CoA from acetyl-CoA: step 1/1. Its function is as follows. Component of the acetyl coenzyme A carboxylase (ACC) complex. Biotin carboxylase (BC) catalyzes the carboxylation of biotin on its carrier protein (BCCP) and then the CO(2) group is transferred by the transcarboxylase to acetyl-CoA to form malonyl-CoA. In Beijerinckia indica subsp. indica (strain ATCC 9039 / DSM 1715 / NCIMB 8712), this protein is Acetyl-coenzyme A carboxylase carboxyl transferase subunit beta.